We begin with the raw amino-acid sequence, 142 residues long: Large ribosomal subunit protein uL13 (142 aa).

This sequence belongs to the universal ribosomal protein uL13 family. As to quaternary structure, part of the 50S ribosomal subunit.

Its function is as follows. This protein is one of the early assembly proteins of the 50S ribosomal subunit, although it is not seen to bind rRNA by itself. It is important during the early stages of 50S assembly. This Laribacter hongkongensis (strain HLHK9) protein is Large ribosomal subunit protein uL13.